Here is a 62-residue protein sequence, read N- to C-terminus: [Ser6, Val10, Asp11]-phyllokinin (62 aa).

An N-terminal signal peptide occupies residues 1–22 (MSFLKKSLLLVLFLGLVSFSIC). Positions 23–51 (EEEKRETEEEENEDDMDEESEEKKRESPD) are excised as a propeptide. The tract at residues 24-62 (EEKRETEEEENEDDMDEESEEKKRESPDRPPGFSPFRVD) is disordered. The span at 30 to 42 (EEEENEDDMDEES) shows a compositional bias: acidic residues.

This sequence belongs to the frog skin active peptide (FSAP) family. Bradykinin-related peptide subfamily. In terms of tissue distribution, expressed by the skin glands.

It is found in the secreted. Functionally, induces relaxation of rat smooth muscle from tail artery and contraction of that from ileum, urinary bladder and uterus. Binds to both bradykinin receptor B1 (BDKRB1) and B2 (BDKRB2). In Agalychnis spurrelli (Gliding leaf frog), this protein is [Ser6, Val10, Asp11]-phyllokinin.